A 434-amino-acid chain; its full sequence is MASFVIEGGHRLSGEIHPQGAKNEVLQIICATLLTAEEVTVNNIPDILDVNNLIQLMREMGVTVAKEGIDTYSFKAENVDLAYLESDKFLKKCSSLRGSVMLIGPMVARFGKALISKPGGDKIGRRRLDTHFVGIQNLGADFRYDESRGIYEITADRLQGSYMLLDEASVTGTANILMAAVLAKGTTTIYNAACEPYLQQLCRMLNRMGAKISGIASNLLTIEGVEELHGTQHTVLPDMIEVGSFIGMAAMTKSEITIKNVSYENLGIIPESFRRLGIKLEQRGDDIYVPAQETYEIESFIDGSIMTIADAPWPGLTPDLLSVMLVVATQAKGSVLIHQKMFESRLFFVDKLIDMGAQIILCDPHRAVVIGHNHGFKLRGARLTSPDIRAGIALLIAAMSAEGTSTISNIEQIDRGYQNIEGRLNAIGARITRI.

A phosphoenolpyruvate-binding site is contributed by 22-23 (KN). A UDP-N-acetyl-alpha-D-glucosamine-binding site is contributed by Arg97. The active-site Proton donor is Asp121. Asp319 and Met341 together coordinate UDP-N-acetyl-alpha-D-glucosamine.

The protein belongs to the EPSP synthase family. MurA subfamily.

Its subcellular location is the cytoplasm. It catalyses the reaction phosphoenolpyruvate + UDP-N-acetyl-alpha-D-glucosamine = UDP-N-acetyl-3-O-(1-carboxyvinyl)-alpha-D-glucosamine + phosphate. Its pathway is cell wall biogenesis; peptidoglycan biosynthesis. Its function is as follows. Cell wall formation. Adds enolpyruvyl to UDP-N-acetylglucosamine. The sequence is that of UDP-N-acetylglucosamine 1-carboxyvinyltransferase from Bacteroides thetaiotaomicron (strain ATCC 29148 / DSM 2079 / JCM 5827 / CCUG 10774 / NCTC 10582 / VPI-5482 / E50).